A 222-amino-acid chain; its full sequence is 7-cyano-7-deazaguanine synthase (222 aa).

14 to 24 (FSGGQDSTTCL) provides a ligand contact to ATP. Zn(2+) is bound by residues Cys-192, Cys-201, Cys-204, and Cys-207.

It belongs to the QueC family. As to quaternary structure, homodimer. Requires Zn(2+) as cofactor.

It carries out the reaction 7-carboxy-7-deazaguanine + NH4(+) + ATP = 7-cyano-7-deazaguanine + ADP + phosphate + H2O + H(+). The protein operates within purine metabolism; 7-cyano-7-deazaguanine biosynthesis. Catalyzes the ATP-dependent conversion of 7-carboxy-7-deazaguanine (CDG) to 7-cyano-7-deazaguanine (preQ(0)). This Clostridium acetobutylicum (strain ATCC 824 / DSM 792 / JCM 1419 / IAM 19013 / LMG 5710 / NBRC 13948 / NRRL B-527 / VKM B-1787 / 2291 / W) protein is 7-cyano-7-deazaguanine synthase.